The chain runs to 470 residues: Iron-sulfur cluster assembly protein SufB (470 aa).

Belongs to the iron-sulfur cluster assembly SufBD family. Component of a complex composed of SufB, SufC and SufD in a stoichiometric ratio of 1:2:1. Interacts with SufC. Interacts with SufD.

It participates in cofactor biosynthesis; iron-sulfur cluster biosynthesis. Functionally, participates in the sulfur mobilization (SUF) pathway for iron-sulfur (Fe-S) cluster biogenesis. As part of a complex consisting of SufB-SufC(2)-SufD, involved in assembly of [4Fe-4S] clusters. Exhibits ATPase activity. In Plasmodium falciparum (isolate 3D7), this protein is Iron-sulfur cluster assembly protein SufB.